A 384-amino-acid chain; its full sequence is 5-cytosine rRNA methyltransferase NSUN4 (384 aa).

The N-terminal 25 residues, 1-25, are a transit peptide targeting the mitochondrion; the sequence is MAALTLRGVRELLKRVDLATVPRRH. S-adenosyl-L-methionine contacts are provided by Gly-185, Gly-186, Lys-187, and Asp-204. Ser-206 bears the Phosphoserine mark. Residues Arg-209, Asp-237, Gly-238, and Asp-255 each contribute to the S-adenosyl-L-methionine site. The Nucleophile role is filled by Cys-310.

The protein belongs to the class I-like SAM-binding methyltransferase superfamily. RsmB/NOP family. Heterodimer with MTERFD2/MTERF4; this interaction seems to be required for NSUN4 recruitment to the mitochondrial large ribosomal subunit.

The protein resides in the mitochondrion. It catalyses the reaction a cytidine in rRNA + S-adenosyl-L-methionine = a 5-methylcytidine in rRNA + S-adenosyl-L-homocysteine + H(+). The enzyme catalyses a cytidine in mRNA + S-adenosyl-L-methionine = a 5-methylcytidine in mRNA + S-adenosyl-L-homocysteine + H(+). Its function is as follows. Mitochondrial RNA cytosine C(5)-methyltransferase that methylates cytosine to 5-methylcytosine (m5C) in various RNAs, such as rRNAs, mRNAs and some long non-coding RNAs (lncRNAs). Involved in mitochondrial ribosome small subunit (SSU) maturation by catalyzing methylation of mitochondrial 12S rRNA; the function is independent of MTERFD2/MTERF4 and assembled mitochondrial ribosome large subunit (LSU). Targeted to LSU by MTERFD2/MTERF4 and probably is involved in a final step in ribosome biogenesis to ensure that SSU and LSU are assembled. In vitro can methylate 16S rRNA of the LSU; the methylation is enhanced by MTERFD/MTERF4. Also acts as a regulator of innate immunity by marking double-stranded mitochondrial RNAs(mt-dsRNAs) generated in response to stress: catalyzes m5C modification on mitochondrial RNAs, such as a mRNAs and lncRNAs, with a preference for the termini of light-strand lncRNAs, promoting their degradation and cytosolic release. Modified light-strand lncRNAs are then recognized by C1QBP reader and recruited to the mitochondrial degradosome complex, which promotes their degradation. This is 5-cytosine rRNA methyltransferase NSUN4 from Homo sapiens (Human).